The primary structure comprises 546 residues: MAAKEIIFSDVARSRLVEGVNILANAVKVTLGPKGRNVVLERSFGSPVVTKDGVSVAKEIELSDRVQNIGAQLVKEVASRTSDAAGDGTTTATVLAQAIVREGQKYVAAGLNPLDLKRGIDKAVIAAIEELKKISKPTTTSKEIAQVATISANGEESIGQRIAEAIDRVGKEGVITVEDGKSLDDELDVVEGLQFDRGYLSPYFINDQDKQVAVLDNPFVLLHDRKVSNIRDLLPILEQVAKAGRPLLIIAEDVEGEALATLVVNNIRGILKTVAVKAPGFGDRRKALLEDIAILTGGQVIAEETGLSLEKATLAELGQAKRIEVGKENTTVIDGAGDSKNIEARVKQIRTQIEEATSDYDREKLQERVAKLAGGVAVIKVGGATEIEVKEKKDRVDDALHATRAAVEEGIVPGGGVALIRVKQAISGLKGANADQDAGIKIVLRALEEPLRQIVTNAGEEASVVVAKVAQGTGNFGYNAQTGEYGDLVQSGVLDPTKVTRTALQNASSVAGLLLTTDATVHEAPKDTPAAGQPGGPGAGGPGLDF.

Residues 30–33 (TLGP), lysine 51, 87–91 (DGTTT), glycine 415, and aspartate 495 each bind ATP. Residues 524–546 (APKDTPAAGQPGGPGAGGPGLDF) are disordered. Positions 533–546 (QPGGPGAGGPGLDF) are enriched in gly residues.

This sequence belongs to the chaperonin (HSP60) family. In terms of assembly, forms a cylinder of 14 subunits composed of two heptameric rings stacked back-to-back. Interacts with the co-chaperonin GroES.

The protein resides in the cytoplasm. The catalysed reaction is ATP + H2O + a folded polypeptide = ADP + phosphate + an unfolded polypeptide.. Functionally, together with its co-chaperonin GroES, plays an essential role in assisting protein folding. The GroEL-GroES system forms a nano-cage that allows encapsulation of the non-native substrate proteins and provides a physical environment optimized to promote and accelerate protein folding. The protein is Chaperonin GroEL 4 of Paraburkholderia xenovorans (strain LB400).